Consider the following 212-residue polypeptide: Mediator of RNA polymerase II transcription subunit 20 (212 aa).

The protein belongs to the Mediator complex subunit 20 family. In terms of assembly, interacts with PPARG. Component of the Mediator complex, which is composed of MED1, MED4, MED6, MED7, MED8, MED9, MED10, MED11, MED12, MED13, MED13L, MED14, MED15, MED16, MED17, MED18, MED19, MED20, MED21, MED22, MED23, MED24, MED25, MED26, MED27, MED29, MED30, MED31, CCNC, CDK8 and CDC2L6/CDK11. The MED12, MED13, CCNC and CDK8 subunits form a distinct module termed the CDK8 module. Mediator containing the CDK8 module is less active than Mediator lacking this module in supporting transcriptional activation. Individual preparations of the Mediator complex lacking one or more distinct subunits have been variously termed ARC, CRSP, DRIP, PC2, SMCC and TRAP.

The protein resides in the nucleus. Component of the Mediator complex, a coactivator involved in the regulated transcription of nearly all RNA polymerase II-dependent genes. Mediator functions as a bridge to convey information from gene-specific regulatory proteins to the basal RNA polymerase II transcription machinery. Mediator is recruited to promoters by direct interactions with regulatory proteins and serves as a scaffold for the assembly of a functional preinitiation complex with RNA polymerase II and the general transcription factors. This chain is Mediator of RNA polymerase II transcription subunit 20 (MED20), found in Homo sapiens (Human).